The chain runs to 531 residues: Bifunctional aspartate aminotransferase and L-aspartate beta-decarboxylase (531 aa).

L-aspartate is bound by residues G114 and N255. The residue at position 314 (K314) is an N6-(pyridoxal phosphate)lysine. R496 provides a ligand contact to L-aspartate.

The protein belongs to the class-I pyridoxal-phosphate-dependent aminotransferase family. As to quaternary structure, homododecamer. Pyridoxal 5'-phosphate serves as cofactor.

It carries out the reaction L-aspartate + H(+) = L-alanine + CO2. It catalyses the reaction L-aspartate + 2-oxoglutarate = oxaloacetate + L-glutamate. With respect to regulation, inhibited by 10 mM Co(2+), Mn(2+) and Ni(2+), and by 1 mM Cu(2+) and Hg(2+). Bifunctional enzyme that has both L-aspartate decarboxylase and transaminase activity. Has high activity with L-aspartate, and much lower activity with D-aspartate, L-lysine and L-glutamine. This chain is Bifunctional aspartate aminotransferase and L-aspartate beta-decarboxylase, found in Pseudomonas sp.